A 435-amino-acid chain; its full sequence is Mitochondrial association factor 1 form a1 (435 aa).

Positions 1–20 (MWRIWRCRLSFLFATGCLLG) are cleaved as a signal peptide. Residues 21-96 (ALTAGLGSQM…VTARRRRNRR (76 aa)) are Vacuolar-facing. The chain crosses the membrane as a helical span at residues 97-117 (IALIATAVGVAVILAALYVLR). The Cytoplasmic segment spans residues 118-435 (RRRAQPPQEP…ERTYTFPQGD (318 aa)). Residues 120-159 (RAQPPQEPEPPTRLRTPRPRAPSGQQQPSESEPPAGVPMT) form a disordered region.

As to quaternary structure, interacts with host SAMM50.

Its subcellular location is the parasitophorous vacuole membrane. Functionally, during host cell infection by tachyzoites, does not play a role in tethering the parasitophorous vacuole to the host mitochondria, probably because it does not bind host mitochondrial import protein TOMM70. The polypeptide is Mitochondrial association factor 1 form a1 (Toxoplasma gondii (strain ATCC 50611 / Me49)).